The chain runs to 194 residues: Ribonuclease HII (194 aa).

The 191-residue stretch at 3–193 (ILTAGVDEAG…VRNLLAQQAL (191 aa)) folds into the RNase H type-2 domain. The a divalent metal cation site is built by D9, E10, and D101.

It belongs to the RNase HII family. Mn(2+) is required as a cofactor. Requires Mg(2+) as cofactor.

Its subcellular location is the cytoplasm. The catalysed reaction is Endonucleolytic cleavage to 5'-phosphomonoester.. In terms of biological role, endonuclease that specifically degrades the RNA of RNA-DNA hybrids. The protein is Ribonuclease HII (rnhB) of Neisseria meningitidis serogroup A / serotype 4A (strain DSM 15465 / Z2491).